The primary structure comprises 341 residues: Platelet-activating factor receptor (341 aa).

Residues 1–16 (MEHNGSFRVDSEFRYT) are Extracellular-facing. Asn-4 carries N-linked (GlcNAc...) asparagine glycosylation. The helical transmembrane segment at 17-38 (LFPIVYSVIFILGVVANGYVLW) threads the bilayer. Over 39–54 (VFANLYPSKKLNEIKI) the chain is Cytoplasmic. A helical transmembrane segment spans residues 55-74 (FMVNLTMADLLFLITLPLWI). The Extracellular portion of the chain corresponds to 75–91 (VYYYNEGDWILPNFLCN). An intrachain disulfide couples Cys-90 to Cys-173. Residues 92–113 (VAGCLFFINTYCSVAFLGVITY) traverse the membrane as a helical segment. At 114 to 133 (NRYQAVAYPIKTAQATTRKR) the chain is on the cytoplasmic side. A helical transmembrane segment spans residues 134–155 (GISLSLIIWVSIVATASYFLAT). The Extracellular segment spans residues 156 to 184 (DSTNLVPNKDGSGNITRCFEHYEPYSVPI). The N-linked (GlcNAc...) asparagine glycan is linked to Asn-169. A helical transmembrane segment spans residues 185–205 (LVVHVFIAFCFFLVFFLIFYC). Residues 206 to 233 (NLVIIHTLLTQPMRQQRKAGVKRRALWM) are Cytoplasmic-facing. The chain crosses the membrane as a helical span at residues 234–254 (VCTVLAVFIICFVPHHVVQLP). At 255-275 (WTLAELGYQTNFHQAINDAHQ) the chain is on the extracellular side. A helical transmembrane segment spans residues 276–295 (ITLCLLSTNCVLDPVIYCFL). Residues 296–341 (TKKFRKHLSEKFYSMRSSRKCSRATSDTCTEVIVPANQTPIVSLKN) are Cytoplasmic-facing.

It belongs to the G-protein coupled receptor 1 family. Interacts with ARRB1. In terms of tissue distribution, found in a range of organs. Expressed most strongly in spleen, followed by skeletal muscle, lung and small intestine. Expressed at moderate levels in the heart. Expressed at relatively low levels in the brain, liver and kidney.

It is found in the cell membrane. Its function is as follows. Receptor for platelet activating factor, a chemotactic phospholipid mediator that possesses potent inflammatory, smooth-muscle contractile and hypotensive activity. Seems to mediate its action via a G protein that activates a phosphatidylinositol-calcium second messenger system. The sequence is that of Platelet-activating factor receptor (Ptafr) from Mus musculus (Mouse).